Consider the following 496-residue polypeptide: Hemophilin secretion modulator (496 aa).

Residues 1-19 form the signal peptide; sequence MKRTLLCCLTLLSCPFLYA. 14 beta stranded membrane-spanning segments follow: residues 198 to 208, 253 to 263, 268 to 277, 291 to 301, 305 to 315, 327 to 337, 341 to 351, 365 to 374, 380 to 389, 403 to 413, 418 to 427, 446 to 455, 462 to 472, and 486 to 495; these read WQGSVSAGYTY, DYEASLIKRYA, HGVALRALAF, TININAGYSYF, NQIGVSPLFEH, WGARAEWMHFI, KAFKLEAESKD, SSAFATFWKI, TFFGGLDVLD, QGVRLGLSKSW, NTTLLSSYRW, QNHTFVVQMP, MTPNLTYRYNH, and HNISFKLEHR.

The protein belongs to the Slam family.

Its subcellular location is the cell outer membrane. Part of a high affinity heme acquisition system. Mediates the secretion of the hemophilin HphA across the outer membrane into the extracellular environment. Plays a supporting role for full virulence. The protein is Hemophilin secretion modulator of Acinetobacter baumannii.